A 170-amino-acid chain; its full sequence is Ubiquinone/menaquinone biosynthesis C-methyltransferase UbiE (170 aa).

The segment covering 1-12 has biased composition (basic and acidic residues); sequence MNDQRKGDHAEP. The segment at 1-22 is disordered; it reads MNDQRKGDHAEPTTHFGYQDVP.

It belongs to the class I-like SAM-binding methyltransferase superfamily. MenG/UbiE family.

It catalyses the reaction a 2-demethylmenaquinol + S-adenosyl-L-methionine = a menaquinol + S-adenosyl-L-homocysteine + H(+). The catalysed reaction is a 2-methoxy-6-(all-trans-polyprenyl)benzene-1,4-diol + S-adenosyl-L-methionine = a 5-methoxy-2-methyl-3-(all-trans-polyprenyl)benzene-1,4-diol + S-adenosyl-L-homocysteine + H(+). Its pathway is quinol/quinone metabolism; menaquinone biosynthesis; menaquinol from 1,4-dihydroxy-2-naphthoate: step 2/2. It participates in cofactor biosynthesis; ubiquinone biosynthesis. Its function is as follows. Methyltransferase required for the conversion of demethylmenaquinol (DMKH2) to menaquinol (MKH2) and the conversion of 2-polyprenyl-6-methoxy-1,4-benzoquinol (DDMQH2) to 2-polyprenyl-3-methyl-6-methoxy-1,4-benzoquinol (DMQH2). The sequence is that of Ubiquinone/menaquinone biosynthesis C-methyltransferase UbiE (ubiE) from Ectopseudomonas oleovorans (Pseudomonas oleovorans).